The chain runs to 401 residues: Coenzyme A biosynthesis bifunctional protein CoaBC (401 aa).

Positions 1–190 (MQTLAGKKIL…FQPKPLQDKS (190 aa)) are phosphopantothenoylcysteine decarboxylase. The active-site Proton donor is Cys159. A phosphopantothenate--cysteine ligase region spans residues 191–401 (ILITAGPTRE…LKQIQTLMGH (211 aa)). Residues Asp279, Lys289, 307–310 (PDIV), Phe326, Lys340, and Lys344 each bind CTP.

This sequence in the N-terminal section; belongs to the HFCD (homo-oligomeric flavin containing Cys decarboxylase) superfamily. The protein in the C-terminal section; belongs to the PPC synthetase family. Requires Mg(2+) as cofactor. FMN serves as cofactor.

The catalysed reaction is N-[(R)-4-phosphopantothenoyl]-L-cysteine + H(+) = (R)-4'-phosphopantetheine + CO2. The enzyme catalyses (R)-4'-phosphopantothenate + L-cysteine + CTP = N-[(R)-4-phosphopantothenoyl]-L-cysteine + CMP + diphosphate + H(+). Its pathway is cofactor biosynthesis; coenzyme A biosynthesis; CoA from (R)-pantothenate: step 2/5. It functions in the pathway cofactor biosynthesis; coenzyme A biosynthesis; CoA from (R)-pantothenate: step 3/5. In terms of biological role, catalyzes two sequential steps in the biosynthesis of coenzyme A. In the first step cysteine is conjugated to 4'-phosphopantothenate to form 4-phosphopantothenoylcysteine. In the second step the latter compound is decarboxylated to form 4'-phosphopantotheine. This chain is Coenzyme A biosynthesis bifunctional protein CoaBC, found in Vibrio vulnificus (strain YJ016).